The primary structure comprises 122 residues: Large ribosomal subunit protein uL14c (122 aa).

Belongs to the universal ribosomal protein uL14 family. As to quaternary structure, part of the 50S ribosomal subunit.

The protein resides in the plastid. The protein localises to the chloroplast. Functionally, binds to 23S rRNA. This is Large ribosomal subunit protein uL14c from Manihot esculenta (Cassava).